The chain runs to 186 residues: Dynactin subunit 3 (186 aa).

Residue Ala-2 is modified to N-acetylalanine. The stretch at 46 to 66 (NIASKRERVKILYKKIEDLIK) forms a coiled coil.

The protein belongs to the dynactin subunit 3 family. Subunit of dynactin, a multiprotein complex part of a tripartite complex with dynein and a adapter, such as BICDL1, BICD2 or HOOK3. The dynactin complex is built around ACTR1A/ACTB filament and consists of an actin-related filament composed of a shoulder domain, a pointed end and a barbed end. Its length is defined by its flexible shoulder domain. The soulder is composed of 2 DCTN1 subunits, 4 DCTN2 and 2 DCTN3. The 4 DCNT2 (via N-terminus) bind the ACTR1A filament and act as molecular rulers to determine the length. The pointed end is important for binding dynein-dynactin cargo adapters. Consists of 4 subunits: ACTR10, DCNT4, DCTN5 and DCTN6. The barbed end is composed of a CAPZA1:CAPZB heterodimers, which binds ACTR1A/ACTB filament and dynactin and stabilizes dynactin.

It localises to the cytoplasm. The protein resides in the cytoskeleton. The protein localises to the microtubule organizing center. It is found in the centrosome. Its subcellular location is the chromosome. It localises to the centromere. The protein resides in the kinetochore. The protein localises to the spindle. It is found in the cleavage furrow. Its subcellular location is the midbody. In terms of biological role, part of the dynactin complex that activates the molecular motor dynein for ultra-processive transport along microtubules. Together with dynein may be involved in spindle assembly and cytokinesis. This chain is Dynactin subunit 3, found in Mus musculus (Mouse).